The sequence spans 241 residues: MARPDGRLPDHLRPVTLTRGWSTHPEGSVLVEFGATRVLCTASVTEGVPRWRKGSGLGWVTAEYAMLPRATNTRSDRESVKGRVGGRTHEISRLIGRSLRASIDLKALGENSIVLDCDVLQADGGTRTAAITGAYVALHDAVTWLAARRSLAGRPETVMHRSVAAVSVGVVAGEPRLDLNYAEDASAEVDLNVVCTGAGDFVEVQGTGEAGVFSRGQLDALLDLAVAGCVELAEAQRKALS.

Residues arginine 87 and 125-127 (GTR) contribute to the phosphate site.

Belongs to the RNase PH family. Homohexameric ring arranged as a trimer of dimers.

The enzyme catalyses tRNA(n+1) + phosphate = tRNA(n) + a ribonucleoside 5'-diphosphate. Phosphorolytic 3'-5' exoribonuclease that plays an important role in tRNA 3'-end maturation. Removes nucleotide residues following the 3'-CCA terminus of tRNAs; can also add nucleotides to the ends of RNA molecules by using nucleoside diphosphates as substrates, but this may not be physiologically important. Probably plays a role in initiation of 16S rRNA degradation (leading to ribosome degradation) during starvation. This Salinispora tropica (strain ATCC BAA-916 / DSM 44818 / JCM 13857 / NBRC 105044 / CNB-440) protein is Ribonuclease PH.